The primary structure comprises 333 residues: 5-formaminoimidazole-4-carboxamide-1-(beta)-D-ribofuranosyl 5'-monophosphate synthetase (333 aa).

5-amino-1-(5-phospho-beta-D-ribosyl)imidazole-4-carboxamide is bound by residues H10 and S70. The ATP-grasp domain occupies 91 to 324; sequence KEVLKWESDR…IAREIKIAIE (234 aa). Residues 121-181 and E203 contribute to the ATP site; that span reads PDDI…VPIY. N231 contributes to the 5-amino-1-(5-phospho-beta-D-ribosyl)imidazole-4-carboxamide binding site. E269 and E282 together coordinate Mg(2+).

This sequence belongs to the phosphohexose mutase family. It depends on Mg(2+) as a cofactor. Mn(2+) is required as a cofactor.

The catalysed reaction is 5-amino-1-(5-phospho-beta-D-ribosyl)imidazole-4-carboxamide + formate + ATP = 5-formamido-1-(5-phospho-D-ribosyl)imidazole-4-carboxamide + ADP + phosphate. It functions in the pathway purine metabolism; IMP biosynthesis via de novo pathway; 5-formamido-1-(5-phospho-D-ribosyl)imidazole-4-carboxamide from 5-amino-1-(5-phospho-D-ribosyl)imidazole-4-carboxamide (formate route): step 1/1. In terms of biological role, catalyzes the ATP- and formate-dependent formylation of 5-aminoimidazole-4-carboxamide-1-beta-d-ribofuranosyl 5'-monophosphate (AICAR) to 5-formaminoimidazole-4-carboxamide-1-beta-d-ribofuranosyl 5'-monophosphate (FAICAR) in the absence of folates. The sequence is that of 5-formaminoimidazole-4-carboxamide-1-(beta)-D-ribofuranosyl 5'-monophosphate synthetase from Pyrococcus horikoshii (strain ATCC 700860 / DSM 12428 / JCM 9974 / NBRC 100139 / OT-3).